Here is a 1257-residue protein sequence, read N- to C-terminus: RAF-like serine/threonine-protein kinase 24 (1257 aa).

The interval 1–21 (MDQAKGYEHVRYTAPDPRDEG) is disordered. The PB1 domain maps to 191–277 (PRDQKLRYVG…EKPRMFLFSS (87 aa)). Basic and acidic residues-rich tracts occupy residues 457–480 (VQDP…KVND) and 493–502 (KEPKMRRESS). 2 disordered regions span residues 457 to 629 (VQDP…RTSQ) and 761 to 789 (SQSE…VPQG). Position 474 is a phosphoserine (serine 474). Over residues 533–548 (TQTSSSTPDPSSSTLS) the composition is skewed to low complexity. Over residues 550-576 (KSLRKSEDHVENNLSAKEPKMRKEHST) the composition is skewed to basic and acidic residues. At serine 555 the chain carries Phosphoserine. Low complexity predominate over residues 583–593 (SVSSVSSDSMV). A compositionally biased stretch (polar residues) spans 769–782 (ETNTPEHVSQTETS). Phosphoserine is present on serine 777. The 266-residue stretch at 974–1239 (LEELKELGSG…PEIARRLRTM (266 aa)) folds into the Protein kinase domain. ATP contacts are provided by residues 980–988 (LGSGTFGTV) and lysine 1001. Serine 1013 is modified (phosphoserine). Catalysis depends on aspartate 1102, which acts as the Proton acceptor.

This sequence belongs to the protein kinase superfamily. Ser/Thr protein kinase family. In terms of processing, hyperphosphorylated in response to auxin in an ABP1- and TMK1-dependent manner.

Its subcellular location is the cytoplasm. It catalyses the reaction L-seryl-[protein] + ATP = O-phospho-L-seryl-[protein] + ADP + H(+). The enzyme catalyses L-threonyl-[protein] + ATP = O-phospho-L-threonyl-[protein] + ADP + H(+). Activated by auxin via rapid phosphorylation downstream of ABP1 and TMK1 signaling. In terms of biological role, RAF-like protein kinase acting, together with RAF20, as a central mediator of a fast response pathway to auxin involving proteins phosphorylation, and leading to rapid cellular responses including membrane depolarization and cytoplasmic streaming. Required for general growth and developmental process. The protein is RAF-like serine/threonine-protein kinase 24 of Arabidopsis thaliana (Mouse-ear cress).